Here is a 116-residue protein sequence, read N- to C-terminus: uncharacterized protein (116 aa).

This sequence belongs to the mimivirus L15/L51/R83 family.

This is an uncharacterized protein from Acanthamoeba polyphaga mimivirus (APMV).